Here is a 206-residue protein sequence, read N- to C-terminus: Pyrrolidone-carboxylate peptidase (206 aa).

Catalysis depends on residues Glu78, Cys141, and His165.

Belongs to the peptidase C15 family. As to quaternary structure, homotetramer.

The protein resides in the cytoplasm. It carries out the reaction Release of an N-terminal pyroglutamyl group from a polypeptide, the second amino acid generally not being Pro.. Its function is as follows. Removes 5-oxoproline from various penultimate amino acid residues except L-proline. This Thermococcus kodakarensis (strain ATCC BAA-918 / JCM 12380 / KOD1) (Pyrococcus kodakaraensis (strain KOD1)) protein is Pyrrolidone-carboxylate peptidase.